The primary structure comprises 1281 residues: Dynactin subunit 1 (1281 aa).

A disordered region spans residues 1–26; the sequence is MAQSRRHMSSRTPSGSRMSTEASARP. The span at 10–22 shows a compositional bias: polar residues; that stretch reads SRTPSGSRMSTEA. The region spanning 48–90 is the CAP-Gly domain; it reads GATLFATGKWVGVILDEAKGKNDGTVQGRKYFTCDEGHGIFVR. Residues 100–221 form a disordered region; the sequence is GADTTSPETP…SPSKEEEGLR (122 aa). Residues 102-114 show a composition bias toward polar residues; it reads DTTSPETPDSSAS. 4 positions are modified to phosphothreonine: Thr-108, Thr-145, Thr-146, and Thr-147. The span at 129 to 152 shows a compositional bias: basic residues; it reads SKLRGLKPKKAPTARKTTTRRPKP. Residues 161–205 are compositionally biased toward low complexity; the sequence is AGPSSSLGPSGSASAGELSSSEPSTPAQTPLAAPIIPTPALTSPG. A Phosphoserine; by PLK1 modification is found at Ser-179. Ser-212 is modified (phosphoserine; by CDK1). Coiled-coil stretches lie at residues 214–547, 943–1049, and 1185–1214; these read SKEE…RQQQ, LKLE…EGLR, and SAQLMEQVAQLKSLSDTIEKLKDEVLKETV. The interval 911 to 1281 is interaction with HPS6; sequence EYDAERPPSK…LHQLHSRLIS (371 aa).

Belongs to the dynactin 150 kDa subunit family. Monomer and homodimer. Subunit of dynactin, a multiprotein complex part of a tripartite complex with dynein and a adapter, such as BICDL1, BICD2 or HOOK3. The dynactin complex is built around ACTR1A/ACTB filament and consists of an actin-related filament composed of a shoulder domain, a pointed end and a barbed end. Its length is defined by its flexible shoulder domain. The soulder is composed of 2 DCTN1 subunits, 4 DCTN2 and 2 DCTN3. DCTN1/p150(glued) binds directly to microtubules and to cytoplasmic dynein. The 4 DCNT2 (via N-terminus) bind the ACTR1A filament and act as molecular rulers to determine the length. The pointed end is important for binding dynein-dynactin cargo adapters. Consists of 4 subunits: ACTR10, DCNT4, DCTN5 and DCTN6. The barbed end is composed of a CAPZA1:CAPZB heterodimers, which binds ACTR1A/ACTB filament and dynactin and stabilizes dynactin. Interacts with the C-terminus of MAPRE1, MAPRE2 and MAPRE3. Interacts with FBXL5. Interacts with ECPAS. Interacts with CLIP1. Interacts with CLN3 and DYNAP. Interacts with MISP; this interaction regulates its distribution at the cell cortex. Interacts with CEP131. Interacts with CEP126. Interacts with dynein intermediate chain and dynein heavy chain. Interacts with PLK1 (via POLO-box domain). Interacts with TBCB and PARD6A. Binds preferentially to tyrosinated microtubules than to detyrosinated microtubules. Interacts with KIF3A. Interacts with HPS6. Interacts with SNX6. Interacts with BICD2. Interacts with DST (isoform 1). Identified in a complex with MREG and RILP. Interacts with BCCIP. Interacts with DCDC1. Interacts with AKNA. Interacts with DYNC1I2. Interacts with RUFY3 and RUFY4. Ubiquitinated by a SCF complex containing FBXL5, leading to its degradation by the proteasome. Post-translationally, phosphorylation by SLK at Thr-145, Thr-146 and Thr-147 targets DCTN1 to the centrosome. It is uncertain if SLK phosphorylates all three threonines or one or two of them. PLK1-mediated phosphorylation at Ser-179 is essential for its localization in the nuclear envelope and promotes its dissociation from microtubules during early mitosis and positively regulates nuclear envelope breakdown during prophase.

It is found in the cytoplasm. Its subcellular location is the cytoskeleton. The protein localises to the microtubule organizing center. The protein resides in the centrosome. It localises to the centriole. It is found in the spindle. Its subcellular location is the nucleus envelope. The protein localises to the cell cortex. In terms of biological role, part of the dynactin complex that activates the molecular motor dynein for ultra-processive transport along microtubules. Plays a key role in dynein-mediated retrograde transport of vesicles and organelles along microtubules by recruiting and tethering dynein to microtubules. Binds to both dynein and microtubules providing a link between specific cargos, microtubules and dynein. Essential for targeting dynein to microtubule plus ends, recruiting dynein to membranous cargos and enhancing dynein processivity (the ability to move along a microtubule for a long distance without falling off the track). Can also act as a brake to slow the dynein motor during motility along the microtubule. Can regulate microtubule stability by promoting microtubule formation, nucleation and polymerization and by inhibiting microtubule catastrophe in neurons. Inhibits microtubule catastrophe by binding both to microtubules and to tubulin, leading to enhanced microtubule stability along the axon. Plays a role in metaphase spindle orientation. Plays a role in centriole cohesion and subdistal appendage organization and function. Its recruitment to the centriole in a KIF3A-dependent manner is essential for the maintenance of centriole cohesion and the formation of subdistal appendage. Also required for microtubule anchoring at the mother centriole. Plays a role in primary cilia formation. The protein is Dynactin subunit 1 (Dctn1) of Mus musculus (Mouse).